The sequence spans 315 residues: Protein OPG185 (315 aa).

A signal peptide spans 1-16 (MTRLPILLLLISLVYA). The region spanning 17–121 (TPFPQTSKKI…NDTDKVDYEE (105 aa)) is the Ig-like V-type domain. The Virion surface segment spans residues 17-279 (TPFPQTSKKI…SNYKTKDFVE (263 aa)). A disulfide bridge connects residues Cys-34 and Cys-103. Asn-37, Asn-69, Asn-112, and Asn-161 each carry an N-linked (GlcNAc...) asparagine; by host glycan. Polar residues predominate over residues 193 to 202 (NTVSASSGES). A disordered region spans residues 193-213 (NTVSASSGESTTDETPEPITD). Asn-254 carries N-linked (GlcNAc...) asparagine; by host glycosylation. A helical membrane pass occupies residues 280–303 (IFGITALIILSAVAIFCITYYIYN). Residues 304–315 (KRSRKYKTENKV) lie on the Intravirion side of the membrane.

This sequence belongs to the orthopoxvirus OPG185 family. As to quaternary structure, heterodimerizes with OPG040. The heterodimer OPG185-OPG040 interacts with components of the entry fusion complex OPG143 and OPG094. Heterodimer with C3/VPC protein; disulfide-linked. Post-translationally, glycosylated; contains phosphate and sulfate-substituted glycans. O-glycosylation is required for hemagglutination and hemadsorption activities of infected cell membranes.

It is found in the virion membrane. Its subcellular location is the host membrane. In terms of biological role, prevents cell to cell fusion by interacting with and directing the viral OPG040 protein on the host plasma membrane. The OPG185-OPG040 complex associates with components of the entry fusion complex (EFC) presumably to avoid superinfection and syncytium formation. Via its interaction with C3/VCP protein, protects the infected cell and probably also the extracellular enveloped virus from complement attack. The polypeptide is Protein OPG185 (OPG185) (Homo sapiens (Human)).